Reading from the N-terminus, the 285-residue chain is Glutamate racemase (285 aa).

Substrate contacts are provided by residues 30–31 (DS) and 62–63 (YG). Cys94 serves as the catalytic Proton donor/acceptor. 95 to 96 (NT) contributes to the substrate binding site. Cys206 (proton donor/acceptor) is an active-site residue. 207–208 (TH) is a binding site for substrate.

Belongs to the aspartate/glutamate racemases family.

It carries out the reaction L-glutamate = D-glutamate. The protein operates within cell wall biogenesis; peptidoglycan biosynthesis. In terms of biological role, provides the (R)-glutamate required for cell wall biosynthesis. This chain is Glutamate racemase, found in Pectobacterium carotovorum subsp. carotovorum (strain PC1).